Reading from the N-terminus, the 130-residue chain is Protachykinin-1 (130 aa).

Residues 1 to 19 (MKILVAVAVIFFISTQLSA) form the signal peptide. A propeptide spanning residues 20–56 (EEIGANDDFNYWSDWSDSDQIKEEMPEPFEHLLQRIA) is cleaved from the precursor. Methionine 68 and methionine 107 each carry methionine amide.

This sequence belongs to the tachykinin family. Post-translationally, the substance P form is cleaved at Pro-59 by the prolyl endopeptidase FAP (seprase) activity (in vitro). Substance P is also cleaved and degraded by Angiotensin-converting enzyme (ACE) and neprilysin (MME).

The protein localises to the secreted. Functionally, tachykinins are active peptides which excite neurons, evoke behavioral responses, are potent vasodilators and secretagogues, and contract (directly or indirectly) many smooth muscles. This is Protachykinin-1 (TAC1) from Bos taurus (Bovine).